The following is a 140-amino-acid chain: Small ribosomal subunit protein uS19 (140 aa).

Belongs to the universal ribosomal protein uS19 family.

In terms of biological role, protein S19 forms a complex with S13 that binds strongly to the 16S ribosomal RNA. This is Small ribosomal subunit protein uS19 from Methanocella arvoryzae (strain DSM 22066 / NBRC 105507 / MRE50).